We begin with the raw amino-acid sequence, 142 residues long: Peptide methionine sulfoxide reductase MsrB (142 aa).

The MsrB domain occupies 2–125 (LKKDKSELTD…NSAAIQFIPY (124 aa)). The active-site Nucleophile is the C114.

The protein belongs to the MsrB Met sulfoxide reductase family.

It catalyses the reaction L-methionyl-[protein] + [thioredoxin]-disulfide + H2O = L-methionyl-(R)-S-oxide-[protein] + [thioredoxin]-dithiol. This chain is Peptide methionine sulfoxide reductase MsrB, found in Staphylococcus aureus (strain bovine RF122 / ET3-1).